The sequence spans 344 residues: Deoxyhypusine hydroxylase (344 aa).

HEAT-like PBS-type repeat units follow at residues 81–107 (LKHELAYCLGQTANGAAIPYLTAVLED) and 115–140 (RHEAAEALGALGDVASLGVLKRFRDR). Positions 83, 84, 116, and 117 each coordinate Fe cation. The disordered stretch occupies residues 169-188 (EKLRASDFSSVDPAPPTAQG). HEAT-like PBS-type repeat units follow at residues 210 to 240 (KRYRAMFALRDLASPPDLPTAVPAVLALAKG), 248 to 274 (FRHEIAFVFGQLAHPASIPALTEALSN), and 281 to 308 (VRHEAAEALGSLGDEEGVEETLRKFLHD). Fe cation is bound by residues His-250, Glu-251, His-283, and Glu-284.

It belongs to the deoxyhypusine hydroxylase family. Fe(2+) serves as cofactor.

It is found in the cytoplasm. The protein localises to the nucleus. The catalysed reaction is [eIF5A protein]-deoxyhypusine + AH2 + O2 = [eIF5A protein]-hypusine + A + H2O. Its pathway is protein modification; eIF5A hypusination. In terms of biological role, catalyzes the hydroxylation of the N(6)-(4-aminobutyl)-L-lysine intermediate to form hypusine, an essential post-translational modification only found in mature eIF-5A factor. The polypeptide is Deoxyhypusine hydroxylase (Chaetomium globosum (strain ATCC 6205 / CBS 148.51 / DSM 1962 / NBRC 6347 / NRRL 1970) (Soil fungus)).